The following is a 65-amino-acid chain: Large ribosomal subunit protein bL35 (65 aa).

It belongs to the bacterial ribosomal protein bL35 family.

In Thermotoga petrophila (strain ATCC BAA-488 / DSM 13995 / JCM 10881 / RKU-1), this protein is Large ribosomal subunit protein bL35.